Consider the following 372-residue polypeptide: Transaldolase 2 (372 aa).

The active-site Schiff-base intermediate with substrate is Lys-140.

Belongs to the transaldolase family. Type 2 subfamily.

It is found in the cytoplasm. It carries out the reaction D-sedoheptulose 7-phosphate + D-glyceraldehyde 3-phosphate = D-erythrose 4-phosphate + beta-D-fructose 6-phosphate. Its pathway is carbohydrate degradation; pentose phosphate pathway; D-glyceraldehyde 3-phosphate and beta-D-fructose 6-phosphate from D-ribose 5-phosphate and D-xylulose 5-phosphate (non-oxidative stage): step 2/3. Transaldolase is important for the balance of metabolites in the pentose-phosphate pathway. This Streptomyces coelicolor (strain ATCC BAA-471 / A3(2) / M145) protein is Transaldolase 2.